Consider the following 134-residue polypeptide: Orexigenic neuropeptide QRFP (134 aa).

Positions 1–18 (MRSPYSLPYLLFLPLGAC) are cleaved as a signal peptide. The propeptide occupies 19–88 (FPVLDTEEPV…RAGFQLRLGR (70 aa)). Phenylalanine 131 carries the post-translational modification Phenylalanine amide.

Belongs to the RFamide neuropeptide family. Ligand for the G-protein coupled receptor QRFPR/GPR103. In terms of tissue distribution, expressed in the hypothalamus.

It localises to the secreted. Stimulates feeding behavior, metabolic rate and locomotor activity and increases blood pressure. May have orexigenic activity. May promote aldosterone secretion by the adrenal gland. This chain is Orexigenic neuropeptide QRFP, found in Bos taurus (Bovine).